A 398-amino-acid polypeptide reads, in one-letter code: Organelle RRM domain-containing protein 1, chloroplastic (398 aa).

A chloroplast-targeting transit peptide spans 1 to 88 (MDTALPSVLI…RWVVVMDTPP (88 aa)). The segment covering 54 to 70 (LLASSSESPPAQLAAAS) has biased composition (low complexity). The disordered stretch occupies residues 54 to 79 (LLASSSESPPAQLAAASTESQSRSSR). One can recognise an RRM domain in the interval 299–377 (KRLFVTGLSF…WMIVVDVAKT (79 aa)).

It is found in the plastid. The protein resides in the chloroplast. Its function is as follows. Involved in C-to-U editing of chloroplastic RNA. Functions as major chloroplastic editing factor. Controls a majority of the chloroplastic editing sites. This Zea mays (Maize) protein is Organelle RRM domain-containing protein 1, chloroplastic (ORRM1).